The following is a 282-amino-acid chain: ATP synthase gamma chain (282 aa).

The protein belongs to the ATPase gamma chain family. F-type ATPases have 2 components, CF(1) - the catalytic core - and CF(0) - the membrane proton channel. CF(1) has five subunits: alpha(3), beta(3), gamma(1), delta(1), epsilon(1). CF(0) has three main subunits: a, b and c.

Its subcellular location is the cell membrane. Functionally, produces ATP from ADP in the presence of a proton gradient across the membrane. The gamma chain is believed to be important in regulating ATPase activity and the flow of protons through the CF(0) complex. In Clostridium botulinum (strain ATCC 19397 / Type A), this protein is ATP synthase gamma chain.